Here is a 910-residue protein sequence, read N- to C-terminus: ZZ-type zinc finger-containing protein 3 (910 aa).

Disordered regions lie at residues 41 to 117 and 133 to 153; these read AHPE…RQAE and EATN…PGEH. The span at 67–84 shows a compositional bias: polar residues; it reads QKGTNNGRTSDVRQQSAR. Phosphoserine is present on residues S89, S96, S137, S138, and S142. Positions 96 to 116 are enriched in basic and acidic residues; the sequence is SSSEKDDLERQALESCERRQA. Residues 142-153 are compositionally biased toward basic and acidic residues; sequence SPVKPDKEPGEH. Residue K283 forms a Glycyl lysine isopeptide (Lys-Gly) (interchain with G-Cter in SUMO2) linkage. Disordered regions lie at residues 303-358, 373-444, and 609-641; these read TAES…VSGE, TSLS…PQDG, and ARPK…SHNR. Polar residues-rich tracts occupy residues 331 to 347 and 397 to 434; these read SSAS…NPLD and SSPT…SESP. An N6-acetyllysine modification is found at K401. S613 carries the phosphoserine modification. Positions 613-622 are enriched in basic and acidic residues; it reads SPLDPKKDGE. Residue K654 forms a Glycyl lysine isopeptide (Lys-Gly) (interchain with G-Cter in SUMO2) linkage. Residues 654-714 form the HTH myb-type domain; sequence KPETFNQLWT…RVQKYFIKLT (61 aa). Positions 687–710 form a DNA-binding region, H-T-H motif; sequence WQKIADELGNRTAKQVASRVQKYF. K708 carries the N6-acetyllysine modification. A Glycyl lysine isopeptide (Lys-Gly) (interchain with G-Cter in SUMO2) cross-link involves residue K715. Residues 825–884 form a ZZ-type zinc finger; the sequence is HVGFKCDNCGVEPIQGVRWHCQDCPPEMSLDFCDSCSDCPHETDIHKEDHQLEPVYKSET. Zn(2+) contacts are provided by C830, C833, C845, C848, C857, C860, H870, and H874.

Component of the ADA2A-containing complex (ATAC), composed of KAT14, KAT2A, TADA2L, TADA3L, ZZ3, MBIP, WDR5, YEATS2, CCDC101 and DR1. Interacts via (ZZ-type zinc finger) with histone H3 in a methylation-independent manner and acetylation on 'Lys-4' (H3K4ac) moderately enhances the interaction.

The protein resides in the nucleus. Functionally, histone H3 reader that is required for the ATAC complex-mediated maintenance of histone acetylation and gene activation. Component of the ATAC complex, a complex with histone acetyltransferase activity on histones H3 and H4. In Mus musculus (Mouse), this protein is ZZ-type zinc finger-containing protein 3 (Zzz3).